The sequence spans 501 residues: Pre-mRNA-splicing factor 38B (501 aa).

The span at 1-11 (MAGSQQQQQQQ) shows a compositional bias: low complexity. Disordered regions lie at residues 1–28 (MAGSQQQQQQQAVSKPTGGKHGNNLPLW) and 208–501 (DQHM…ADSP). Residues 243-273 (GDKRRSRTPRRSPSPRKSQNRSRSRSHHRER) are compositionally biased toward basic residues. A coiled-coil region spans residues 281-302 (ELERERDRQRKEREGKDRDRDR). Positions 281-328 (ELERERDRQRKEREGKDRDRDRDRDRERDRERDRDRRRSRTPDRNAER) are enriched in basic and acidic residues. The segment covering 329-341 (RRSRSRERRRSRS) has biased composition (basic residues). A compositionally biased stretch (basic and acidic residues) spans 342 to 408 (TSRDKRTERK…EEKKHREEKR (67 aa)). Basic residues predominate over residues 409-435 (SKRSRSRSRDRKHKAERSSKKRSRSGS). Over residues 437–447 (SRQEAGEEKNR) the composition is skewed to basic and acidic residues. Basic residues predominate over residues 448–468 (KRERSHSKDRQHKRSRSKERS). The span at 469 to 491 (HRRESSNERIHARQERPSSESGE) shows a compositional bias: basic and acidic residues. The span at 492-501 (RTNSVRADSP) shows a compositional bias: polar residues.

This sequence belongs to the PRP38 family.

The protein localises to the nucleus. Its function is as follows. May be required for pre-mRNA splicing. The protein is Pre-mRNA-splicing factor 38B (prpf38b) of Danio rerio (Zebrafish).